The following is a 168-amino-acid chain: ATP synthase subunit b (168 aa).

A helical transmembrane segment spans residues 11-31 (EISIINTLWYLIVFSILLLAV).

This sequence belongs to the ATPase B chain family. F-type ATPases have 2 components, F(1) - the catalytic core - and F(0) - the membrane proton channel. F(1) has five subunits: alpha(3), beta(3), gamma(1), delta(1), epsilon(1). F(0) has three main subunits: a(1), b(2) and c(10-14). The alpha and beta chains form an alternating ring which encloses part of the gamma chain. F(1) is attached to F(0) by a central stalk formed by the gamma and epsilon chains, while a peripheral stalk is formed by the delta and b chains.

Its subcellular location is the cell membrane. Functionally, f(1)F(0) ATP synthase produces ATP from ADP in the presence of a proton or sodium gradient. F-type ATPases consist of two structural domains, F(1) containing the extramembraneous catalytic core and F(0) containing the membrane proton channel, linked together by a central stalk and a peripheral stalk. During catalysis, ATP synthesis in the catalytic domain of F(1) is coupled via a rotary mechanism of the central stalk subunits to proton translocation. In terms of biological role, component of the F(0) channel, it forms part of the peripheral stalk, linking F(1) to F(0). This is ATP synthase subunit b from Lactobacillus delbrueckii subsp. bulgaricus (strain ATCC 11842 / DSM 20081 / BCRC 10696 / JCM 1002 / NBRC 13953 / NCIMB 11778 / NCTC 12712 / WDCM 00102 / Lb 14).